We begin with the raw amino-acid sequence, 295 residues long: bZIP transcription factor RISBZ5 (295 aa).

The segment covering 16–26 has biased composition (basic and acidic residues); it reads REEAGAGDRKP. A disordered region spans residues 16–157; it reads REEAGAGDRK…ARRSRRRKQA (142 aa). Acidic residues predominate over residues 109–119; the sequence is SDSDSDCDSLL. A compositionally biased stretch (basic and acidic residues) spans 120–136; sequence EAERSPRLRGTKSTETK. Positions 134–197 constitute a bZIP domain; it reads ETKRIRRMVS…NTAVTDNRIL (64 aa). Residues 136 to 155 are basic motif; the sequence is KRIRRMVSNRESARRSRRRK. A leucine-zipper region spans residues 162-176; that stretch reads LESQVEQLKGENSSL.

In terms of assembly, homodimer.

The protein localises to the nucleus. In terms of biological role, probable transcription factor that binds to the DNA specific sequence 5'-TGAGTCA-3' found in seed storage protein gene promoters. May function as a negative regulator in cold and drought stress responses. The protein is bZIP transcription factor RISBZ5 of Oryza sativa subsp. japonica (Rice).